The chain runs to 105 residues: uncharacterized protein (105 aa).

This sequence belongs to the M.jannaschii MJ0023/MJ0349/MJ1072/MJ1074/MJ1107/MJECL16 family.

This is an uncharacterized protein from Methanocaldococcus jannaschii (strain ATCC 43067 / DSM 2661 / JAL-1 / JCM 10045 / NBRC 100440) (Methanococcus jannaschii).